The sequence spans 497 residues: Putative zinc finger and SCAN domain-containing protein 5D (497 aa).

Residues 41–123 (KAGRRMFSCP…DLLRNNRRPK (83 aa)) form the SCAN box domain. Residues 148-342 (PASVRDDPRG…GPAGAVSHPN (195 aa)) form a disordered region. Residues 158–167 (VSSQRASSVN) are compositionally biased toward polar residues. Composition is skewed to basic and acidic residues over residues 216–229 (PTLEKDLNVDREEN) and 249–259 (KEGKEPKKRAS). 5 C2H2-type zinc fingers span residues 352-374 (FACGVCNKRFTCNSKLAIHMRSH), 380-402 (FQCNFCERCFTQLSDLRVHQRIH), 408-430 (YTCDICHKRFNRMFSLKCHKRSH), 436-458 (YKCKDCNQVFTYRKNLNEHKLIH), and 464-486 (YKCPKCLRAFRRPETLKYHQKTH).

It is found in the nucleus. In Homo sapiens (Human), this protein is Putative zinc finger and SCAN domain-containing protein 5D.